A 307-amino-acid chain; its full sequence is Putative lipid kinase SE_0507 (307 aa).

The 137-residue stretch at 3-139 folds into the DAGKc domain; sequence QPYNHGVLFY…YDVLKVNDLY (137 aa). ATP is bound by residues S44, 74-80, and T101; that span reads GDGTLNE. S220, D223, and R225 together coordinate Mg(2+). The active-site Proton acceptor is the E281.

This sequence belongs to the diacylglycerol/lipid kinase family. It depends on Mg(2+) as a cofactor.

In terms of biological role, may catalyze the ATP-dependent phosphorylation of lipids other than diacylglycerol (DAG). This is Putative lipid kinase SE_0507 from Staphylococcus epidermidis (strain ATCC 12228 / FDA PCI 1200).